The chain runs to 58 residues: Photosystem II reaction center protein K (58 aa).

Residues 1–21 constitute a propeptide that is removed on maturation; that stretch reads MLVISNVYPSNLFTLINPFFA. The helical transmembrane segment at 29–49 threads the bilayer; that stretch reads IFDPIVDVMPIIPVFFFLLAF.

It belongs to the PsbK family. In terms of assembly, PSII is composed of 1 copy each of membrane proteins PsbA, PsbB, PsbC, PsbD, PsbE, PsbF, PsbH, PsbI, PsbJ, PsbK, PsbL, PsbM, PsbT, PsbX, PsbY, PsbZ, Psb30/Ycf12, at least 3 peripheral proteins of the oxygen-evolving complex and a large number of cofactors. It forms dimeric complexes.

Its subcellular location is the plastid. It localises to the chloroplast thylakoid membrane. Its function is as follows. One of the components of the core complex of photosystem II (PSII). PSII is a light-driven water:plastoquinone oxidoreductase that uses light energy to abstract electrons from H(2)O, generating O(2) and a proton gradient subsequently used for ATP formation. It consists of a core antenna complex that captures photons, and an electron transfer chain that converts photonic excitation into a charge separation. The chain is Photosystem II reaction center protein K from Psilotum nudum (Whisk fern).